Consider the following 385-residue polypeptide: Glucans biosynthesis protein C (385 aa).

The next 10 helical transmembrane spans lie at 17–37 (AWLM…SHTW), 60–80 (MQVF…RYPL), 91–111 (VGIP…IMLQ), 137–157 (ISHL…VWIF), 173–193 (KFSM…YAVI), 212–232 (FIVM…LAFI), 239–259 (LFTT…VAYL), 274–294 (TESV…FSFG), 311–331 (ASLF…AYIT), and 338–358 (WLGF…LYEI).

Belongs to the acyltransferase 3 family. OpgC subfamily.

The protein resides in the cell membrane. The protein operates within glycan metabolism; osmoregulated periplasmic glucan (OPG) biosynthesis. In terms of biological role, necessary for the succinyl substitution of periplasmic glucans. Could catalyze the transfer of succinyl residues from the cytoplasmic side of the membrane to the nascent glucan backbones on the periplasmic side of the membrane. The polypeptide is Glucans biosynthesis protein C (Escherichia coli O17:K52:H18 (strain UMN026 / ExPEC)).